Reading from the N-terminus, the 607-residue chain is Homologous recombination OB-fold protein (607 aa).

Disordered regions lie at residues 25 to 49, 84 to 108, 196 to 308, and 531 to 581; these read LRPNSSRPQETPQAHSSKLSPSYPA, ISSSSSGSQQRMTGTKVSQESSGRQ, PWPS…TTVT, and LKPP…DDLD. Polar residues-rich tracts occupy residues 27–49 and 92–108; these read PNSSRPQETPQAHSSKLSPSYPA and QQRMTGTKVSQESSGRQ. A Phosphoserine modification is found at Ser30. Arg281 carries the asymmetric dimethylarginine modification. Low complexity predominate over residues 295–308; it reads SPFSTPRSTSTTVT. A compositionally biased stretch (acidic residues) spans 570-581; the sequence is PEEELPEADDLD.

Interacts with MCM8; this interaction is necessary for MCM8-MCM9 helicase complex recruitment to DNA damage sites. Interacts with RPA1; this interaction associates HROB with the RPA complex.

It localises to the nucleus. It is found in the chromosome. DNA-binding protein involved in homologous recombination that acts by recruiting the MCM8-MCM9 helicase complex to sites of DNA damage to promote DNA repair synthesis. This is Homologous recombination OB-fold protein from Rattus norvegicus (Rat).